The sequence spans 148 residues: F420H(2)-dependent quinone reductase MT1609 (148 aa).

Residues 46 to 48 (AKT), 52 to 57 (RKTPLM), 68 to 71 (VASL), 79 to 83 (VWYHN), and Tyr-125 contribute to the coenzyme F420-(gamma-Glu)n site.

Belongs to the F420H(2)-dependent quinone reductase family.

Its subcellular location is the cell membrane. It catalyses the reaction oxidized coenzyme F420-(gamma-L-Glu)(n) + a quinol + H(+) = reduced coenzyme F420-(gamma-L-Glu)(n) + a quinone. Involved in a F420-dependent anti-oxidant mechanism that protects M.tuberculosis against oxidative stress and bactericidal agents. Catalyzes the F420H(2)-dependent two-electron reduction of quinones to dihydroquinones, thereby preventing the formation of cytotoxic semiquinones obtained by the one-electron reduction pathway. In vitro, catalyzes the reduction of menadione to menadiol; since menaquinone is the sole quinone electron carrier in the respiratory chain in M.tuberculosis, the physiological electron acceptor for Fqr-mediated F420H(2) oxidation is therefore likely to be the endogenous menaquinone found in the membrane fraction of M.tuberculosis. The polypeptide is F420H(2)-dependent quinone reductase MT1609 (Mycobacterium tuberculosis (strain CDC 1551 / Oshkosh)).